Consider the following 187-residue polypeptide: UPF0301 protein YqgE (187 aa).

It belongs to the UPF0301 (AlgH) family.

The protein is UPF0301 protein YqgE of Salmonella heidelberg (strain SL476).